Here is a 100-residue protein sequence, read N- to C-terminus: Large ribosomal subunit protein eL31 (100 aa).

It belongs to the eukaryotic ribosomal protein eL31 family.

The chain is Large ribosomal subunit protein eL31 from Hyperthermus butylicus (strain DSM 5456 / JCM 9403 / PLM1-5).